A 110-amino-acid polypeptide reads, in one-letter code: Multidrug transporter PA4990 (110 aa).

4 helical membrane-spanning segments follow: residues 7-27 (LAIA…VAGF), 31-51 (LPLL…VLVM), 58-78 (VVYA…AMFV), and 85-105 (PAAL…QLFS).

This sequence belongs to the drug/metabolite transporter (DMT) superfamily. Small multidrug resistance (SMR) (TC 2.A.7.1) family.

It is found in the cell membrane. Confers resistance to ethidium bromide, acriflavine and methyl viologen. The protein is Multidrug transporter PA4990 of Pseudomonas aeruginosa (strain ATCC 15692 / DSM 22644 / CIP 104116 / JCM 14847 / LMG 12228 / 1C / PRS 101 / PAO1).